The sequence spans 274 residues: MSDMHAASREALAKVSSDLDTALKADNTVAVAAQAGTELFDVVEVLDGDRGLRVAVADSSKDAQQRVGLIGAVFGGKVSQVTLEILKDAAEQTWSTPREFRTGLVGLGRRALLRSAEMQGQLGRVEDELFRLSRILDRESQLTQLLSDRTQDSAARRDLLAKVLYGKVTSVTEALALQVIGRPEHNPIDDVAALAAAAAKLQGRSVAHVVSAVDLNDGQQQALADKLGRIYGRAMSIHSEVDTSLLGGMVIRVGDEVIDGSTSGKLERLRATFA.

The protein belongs to the ATPase delta chain family. In terms of assembly, F-type ATPases have 2 components, F(1) - the catalytic core - and F(0) - the membrane proton channel. F(1) has five subunits: alpha(3), beta(3), gamma(1), delta(1), epsilon(1). F(0) has three main subunits: a(1), b(2) and c(10-14). The alpha and beta chains form an alternating ring which encloses part of the gamma chain. F(1) is attached to F(0) by a central stalk formed by the gamma and epsilon chains, while a peripheral stalk is formed by the delta and b chains.

The protein localises to the cell membrane. In terms of biological role, f(1)F(0) ATP synthase produces ATP from ADP in the presence of a proton or sodium gradient. F-type ATPases consist of two structural domains, F(1) containing the extramembraneous catalytic core and F(0) containing the membrane proton channel, linked together by a central stalk and a peripheral stalk. During catalysis, ATP synthesis in the catalytic domain of F(1) is coupled via a rotary mechanism of the central stalk subunits to proton translocation. This protein is part of the stalk that links CF(0) to CF(1). It either transmits conformational changes from CF(0) to CF(1) or is implicated in proton conduction. The sequence is that of ATP synthase subunit delta from Corynebacterium efficiens (strain DSM 44549 / YS-314 / AJ 12310 / JCM 11189 / NBRC 100395).